A 97-amino-acid chain; its full sequence is Antitoxin TacA2 (97 aa).

This sequence belongs to the TacA antitoxin family. In terms of assembly, homodimer. Forms a complex with cognate toxin TacT2.

In terms of biological role, antitoxin component of a type II toxin-antitoxin (TA) system. Counteracts the toxic effect of cognate toxin TacT2. The TacA2-TacT2 complex both represses and derepresses expression of its own operon. This Salmonella enteritidis protein is Antitoxin TacA2.